The sequence spans 261 residues: Acidic leucine-rich nuclear phosphoprotein 32 family member B (261 aa).

LRR repeat units follow at residues 16-40 (PAAV…LTAE), 43-64 (NLEF…PKLP), 65-87 (KLKK…AEKL), and 89-110 (NLTH…EPLK). Lys-86 carries the post-translational modification N6-acetyllysine. The region spanning 123-161 (CEVTNLNDYRESVFKLLPQLTYLDGYDREDREAPDSDAE) is the LRRCT domain. The disordered stretch occupies residues 149 to 261 (DREDREAPDS…RETDDEGEDD (113 aa)). The segment covering 157-243 (DSDAEVDGVD…DEDEDEEEEE (87 aa)) has biased composition (acidic residues). Ser-158 is modified (phosphoserine). A compositionally biased stretch (basic and acidic residues) spans 244 to 254 (SGKGEKRKRET). Positions 249–252 (KRKR) match the Nuclear localization signal motif. At Thr-254 the chain carries Phosphothreonine.

Belongs to the ANP32 family. Interacts with histones H3 and H4. Interacts with KLF5; this interaction induces promoter region-specific histone incorporation and inhibition of histone acetylation by ANP32B. Post-translationally, some Glu residues are glycylated by TTLL8; a modification that generates a side chains of glycine on the gamma-carboxyl groups of specific glutamate residues. In terms of processing, directly cleaved by caspase-3/CASP3.

It localises to the nucleus. Its function is as follows. Multifunctional protein that is involved in the regulation of many processes including cell proliferation, apoptosis, cell cycle progression or transcription. Regulates the proliferation of neuronal stem cells, differentiation of leukemic cells and progression from G1 to S phase of the cell cycle. As negative regulator of caspase-3-dependent apoptosis, may act as an antagonist of ANP32A in regulating tissue homeostasis. Exhibits histone chaperone properties, able to recruit histones to certain promoters, thus regulating the transcription of specific genes. Also plays an essential role in the nucleocytoplasmic transport of specific mRNAs via the uncommon nuclear mRNA export receptor XPO1/CRM1. Participates in the regulation of adequate adaptive immune responses by acting on mRNA expression and cell proliferation. The sequence is that of Acidic leucine-rich nuclear phosphoprotein 32 family member B (ANP32B) from Bos taurus (Bovine).